A 476-amino-acid polypeptide reads, in one-letter code: RNA-binding protein 45 (476 aa).

The segment at 1–20 (MDEAGSSASGGGFRPGVDSL) is disordered. RRM domains lie at 26–106 (SRIF…IAQS) and 121–195 (TRIF…PKNK). Lys-34 is covalently cross-linked (Glycyl lysine isopeptide (Lys-Gly) (interchain with G-Cter in SUMO2)). Phosphoserine occurs at positions 199 and 464. The RRM 3 domain maps to 392 to 464 (ERLFIVFNPH…VRLKVMLADS (73 aa)).

It localises to the cytoplasm. The protein resides in the nucleus. Functionally, RNA-binding protein with binding specificity for poly(C). May play an important role in neural development. The polypeptide is RNA-binding protein 45 (RBM45) (Homo sapiens (Human)).